We begin with the raw amino-acid sequence, 253 residues long: Claudin domain-containing protein 1 (253 aa).

Residues 5–25 form a helical membrane-spanning segment; that stretch reads FATAFVIACVLSLISTIYMAA. N-linked (GlcNAc...) asparagine glycans are attached at residues Asn42 and Asn72. 3 helical membrane-spanning segments follow: residues 141 to 161, 175 to 195, and 216 to 236; these read FLLPFVSLGLMCFGALIGLCA, ILHLLAGLCTLGSVSCYVAGI, and FCLACVSAPLQFMAAALFIWA.

The protein belongs to the PMP-22/EMP/MP20 family. In terms of tissue distribution, in the brain, highly expressed in endothelial cells of the cerebellum compared to other regions (at protein level).

Its subcellular location is the cell junction. It is found in the tight junction. It localises to the cell membrane. In terms of biological role, plays a role in negatively regulating the permeability of cells to small molecules. The sequence is that of Claudin domain-containing protein 1 (Cldnd1) from Mus musculus (Mouse).